Reading from the N-terminus, the 390-residue chain is Ankyrin repeat domain-containing protein 63 (390 aa).

ANK repeat units follow at residues 11 to 40 (AGTRTFLEAMQAGKVHLARFVLDALDRSII), 46 to 79 (QGRTPLMVAVGLPDPAMRSRFVRLLLEQGAAVNL), 83 to 112 (RGRTALSLACERGHLDAVQLLVQFSGDPEA), 116 to 145 (AGNSPVMWAAACGHGAVLEFLVRSFRRLGL), and 153 to 182 (AGLTALQLAASRGHGTCVQALTGPWGRAAA). Disordered regions lie at residues 181–213 (AAAAAARGSNSDSPPGHPAPAPSPERRRPSPRR) and 226–245 (AGGHGHGHGHGHGHGGELAS). Serine 193 is subject to Phosphoserine. Serine 304 carries the post-translational modification Phosphoserine. Positions 320 to 377 (VGLSPHPEGCPGSGRLGLRRRSTAPDIPSLVGEASGPESGPELENNALPFSVPGPKPW) are disordered.

The polypeptide is Ankyrin repeat domain-containing protein 63 (Mus musculus (Mouse)).